Reading from the N-terminus, the 315-residue chain is Petrobactin import system permease protein YclO (315 aa).

9 consecutive transmembrane segments (helical) span residues Ile7 to Gly27, Val40 to Ile60, Leu76 to Met96, Ile100 to Met120, Ile128 to Phe148, Ile172 to Trp192, Leu223 to Leu243, Tyr262 to Val282, and Phe288 to Leu308.

It belongs to the binding-protein-dependent transport system permease family. FecCD subfamily. The complex is composed of two ATP-binding proteins (YclP), two transmembrane proteins (YclN and YclO) and a solute-binding protein (YclQ).

It is found in the cell membrane. Functionally, part of the ABC transporter complex YclNOPQ involved in uptake of ferric-petrobactin. Petrobactin is a photoreactive 3,4-catecholate siderophore produced by many members of the B.cereus group, including B.anthracis. Probably responsible for the translocation of the substrate across the membrane. The polypeptide is Petrobactin import system permease protein YclO (yclO) (Bacillus subtilis (strain 168)).